The following is a 259-amino-acid chain: Small ribosomal subunit protein uS2 (259 aa).

It belongs to the universal ribosomal protein uS2 family.

This is Small ribosomal subunit protein uS2 from Streptococcus pneumoniae (strain CGSP14).